The primary structure comprises 409 residues: Nucleoprotein (409 aa).

Disordered regions lie at residues 1–32, 46–84, 121–194, and 238–259; these read MASG…SSGN, SPQP…KGRR, ADVK…GSED, and VDQV…DKMN. The segment at 29–160 is RNA-binding; that stretch reads SSGNASWFQA…GNFRWDFIPL (132 aa). In terms of domain architecture, CoV N NTD spans 31–156; that stretch reads GNASWFQAIK…GGPDGNFRWD (126 aa). A compositionally biased stretch (basic residues) spans 70–84; that stretch reads YWRRQARFKPGKGRR. A compositionally biased stretch (low complexity) spans 162-179; sequence RGRSGRSTAASSAASSRP. Basic and acidic residues-rich tracts occupy residues 180-192 and 247-259; these read PSRE…RSGS and KGKE…DKMN. Serine 190 and serine 192 each carry phosphoserine; by host. The CoV N CTD domain maps to 215 to 331; sequence TKAKADEMAH…QCVDGVGTRP (117 aa). The interval 226 to 333 is dimerization; it reads RYCKRTIPPG…VDGVGTRPKD (108 aa). Cysteine 320 and cysteine 323 are oxidised to a cystine. The disordered stretch occupies residues 326-409; the sequence is GVGTRPKDDE…GDSALGENEL (84 aa). Over residues 341 to 356 the composition is skewed to low complexity; that stretch reads RSSSRPATRTSSPAPR. The segment covering 358–367 has biased composition (basic residues); sequence QRLKKEKRPK. Residues 368–384 are compositionally biased toward basic and acidic residues; sequence KQDDEVDKALTSDEERN. Threonine 378 carries the post-translational modification Phosphothreonine; by host. Serine 379 carries the post-translational modification Phosphoserine; by host.

This sequence belongs to the gammacoronavirus nucleocapsid protein family. Homooligomer. Both monomeric and oligomeric forms interact with RNA. Interacts with protein M. Interacts with NSP3; this interaction serves to tether the genome to the newly translated replicase-transcriptase complex at a very early stage of infection. ADP-ribosylated. The ADP-ribosylation is retained in the virion during infection. Post-translationally, phosphorylated on serine and threonine residues.

Its subcellular location is the virion. The protein resides in the host endoplasmic reticulum-Golgi intermediate compartment. It is found in the host Golgi apparatus. Functionally, packages the positive strand viral genome RNA into a helical ribonucleocapsid (RNP) and plays a fundamental role during virion assembly through its interactions with the viral genome and membrane protein M. Plays an important role in enhancing the efficiency of subgenomic viral RNA transcription as well as viral replication. The polypeptide is Nucleoprotein (Avian infectious bronchitis virus (strain Gray) (IBV)).